We begin with the raw amino-acid sequence, 162 residues long: Lymphocyte antigen 86 (162 aa).

The N-terminal stretch at Met1 to Gly20 is a signal peptide. 3 cysteine pairs are disulfide-bonded: Cys33-Cys58, Cys45-Cys154, and Cys102-Cys112. Residue Asn96 is glycosylated (N-linked (GlcNAc...) asparagine). A glycan (N-linked (GlcNAc...) asparagine) is linked at Asn156.

M-shaped tetramer of two CD180-LY86 heterodimers. Highly expressed in B-cells, monocytes and tonsil.

It localises to the secreted. The protein resides in the extracellular space. May cooperate with CD180 and TLR4 to mediate the innate immune response to bacterial lipopolysaccharide (LPS) and cytokine production. Important for efficient CD180 cell surface expression. The protein is Lymphocyte antigen 86 (LY86) of Homo sapiens (Human).